An 82-amino-acid polypeptide reads, in one-letter code: Delta-ctenitoxin-Pn2c (82 aa).

The signal sequence occupies residues 1 to 17 (MKVAILFLSILVLAVAS). Positions 18 to 34 (ESIEESRDDFAVEELGR) are excised as a propeptide. Intrachain disulfides connect C37-C51, C44-C57, C48-C80, C50-C65, and C59-C63.

Expressed by the venom gland.

It localises to the secreted. Functionally, reversible inhibitor of voltage-gated sodium channels (Nav). Delays the fast inactivation kinetics of neuronal-type sodium channels. In vivo, it induces rat penile erection. This effect may be due to the neuronal nitric oxide synthase (NOS1), since one of its selective inhibitor completely abolishes all the toxic effects of the toxin. This toxin also causes scratching, lacrimation, hypersalivation, sweating and agitation followed by spastic paralysis of the anterior and posterior extremities and death at dose levels of 0.24 mg/mouse. It is also insecticidal to the larval and adult forms of the house fly. This Phoneutria nigriventer (Brazilian armed spider) protein is Delta-ctenitoxin-Pn2c.